A 716-amino-acid chain; its full sequence is Translation initiation factor IF-2 (716 aa).

Residues 50-136 (YKKGGARAKS…VKPKKELPEK (87 aa)) form a disordered region. Residues 62 to 84 (PAETNKNKQPQGVNQQSAGNQPN) are compositionally biased toward polar residues. A compositionally biased stretch (basic residues) spans 101–113 (KNKKNNNNKKNKR). Residues 114–126 (NNNNNKNQHQQKP) show a composition bias toward low complexity. Residues 217-386 (IRPPVVTIMG…LLVSEVEELK (170 aa)) enclose the tr-type G domain. Residues 226–233 (GHVDHGKT) form a G1 region. 226–233 (GHVDHGKT) contacts GTP. Positions 251-255 (GITQH) are G2. The tract at residues 272 to 275 (DTPG) is G3. Residues 272–276 (DTPGH) and 326–329 (NKID) contribute to the GTP site. Positions 326 to 329 (NKID) are G4. A G5 region spans residues 362-364 (SAL).

It belongs to the TRAFAC class translation factor GTPase superfamily. Classic translation factor GTPase family. IF-2 subfamily.

The protein resides in the cytoplasm. Functionally, one of the essential components for the initiation of protein synthesis. Protects formylmethionyl-tRNA from spontaneous hydrolysis and promotes its binding to the 30S ribosomal subunits. Also involved in the hydrolysis of GTP during the formation of the 70S ribosomal complex. The sequence is that of Translation initiation factor IF-2 (infB) from Bacillus subtilis (strain 168).